The chain runs to 210 residues: Ribosomal RNA small subunit methyltransferase G (210 aa).

Residues Gly76, Met81, 127–128 (VE), and Arg145 each bind S-adenosyl-L-methionine.

This sequence belongs to the methyltransferase superfamily. RNA methyltransferase RsmG family.

It localises to the cytoplasm. It catalyses the reaction guanosine(527) in 16S rRNA + S-adenosyl-L-methionine = N(7)-methylguanosine(527) in 16S rRNA + S-adenosyl-L-homocysteine. Functionally, specifically methylates the N7 position of guanine in position 527 of 16S rRNA. This is Ribosomal RNA small subunit methyltransferase G from Acinetobacter baumannii (strain SDF).